Here is a 138-residue protein sequence, read N- to C-terminus: 1,4-dihydroxy-2-naphthoyl-CoA hydrolase (138 aa).

The active site involves D16.

Belongs to the 4-hydroxybenzoyl-CoA thioesterase family. DHNA-CoA hydrolase subfamily.

It catalyses the reaction 1,4-dihydroxy-2-naphthoyl-CoA + H2O = 1,4-dihydroxy-2-naphthoate + CoA + H(+). It participates in cofactor biosynthesis; phylloquinone biosynthesis. Its pathway is quinol/quinone metabolism; 1,4-dihydroxy-2-naphthoate biosynthesis; 1,4-dihydroxy-2-naphthoate from chorismate: step 7/7. Its function is as follows. Catalyzes the specific hydrolysis of 1,4-dihydroxy-2-naphthoyl-CoA (DHNA-CoA) to 1,4-dihydroxy-2-naphthoate (DHNA), a reaction involved in phylloquinone (vitamin K1) biosynthesis. Is not active on benzoyl-CoA, phenylacetyl-CoA and aliphatic acyl-CoA thioesters. The protein is 1,4-dihydroxy-2-naphthoyl-CoA hydrolase of Synechocystis sp. (strain ATCC 27184 / PCC 6803 / Kazusa).